We begin with the raw amino-acid sequence, 119 residues long: Holo-[acyl-carrier-protein] synthase (119 aa).

Mg(2+) is bound by residues Asp8 and Glu58.

It belongs to the P-Pant transferase superfamily. AcpS family. Mg(2+) serves as cofactor.

It is found in the cytoplasm. It catalyses the reaction apo-[ACP] + CoA = holo-[ACP] + adenosine 3',5'-bisphosphate + H(+). Transfers the 4'-phosphopantetheine moiety from coenzyme A to a Ser of acyl-carrier-protein. The protein is Holo-[acyl-carrier-protein] synthase of Bacillus cereus (strain ATCC 10987 / NRS 248).